Reading from the N-terminus, the 83-residue chain is Large ribosomal subunit protein bL31B (83 aa).

This sequence belongs to the bacterial ribosomal protein bL31 family. Type B subfamily. In terms of assembly, part of the 50S ribosomal subunit.

Binds the 23S rRNA. The protein is Large ribosomal subunit protein bL31B of Hydrogenovibrio crunogenus (strain DSM 25203 / XCL-2) (Thiomicrospira crunogena).